Consider the following 405-residue polypeptide: MAGVLGMILAGGEGSRLRPLTESRSKPAVPFGGSYRLIDFALNNFVNADLMRIYVLTQFKSQSLFHHMKKGWNINGITDRFIDPIPAQMRTGKRWYEGTADAIYQNLRFMELSEPEQVCIFGSDHIYKMDIKQMLSFHKEKQAALTVSALRMPLAEASQFGVIEVDAEGRMVGFEEKPSAPKSIPGDPDFALVSMGNYIFEADVLFAELIEDADNENSSHDFGKDIIPKMFPRGDVFVYDFSQNRISGEKAEVYWRDVGTIDAYWQAHMDLLKTDAPFSLYNRKWPLHTYQPPLPPATFTDSDNGRVQIIDSLVCNGSYVRGSRIEKSVLGFRSNIASACDISESILLGDVKVGEGCVLRRVIVDKDVDIAPGTQIGVNLQEDKKVFHVSDDGIVVIPKGARVGY.

Alpha-D-glucose 1-phosphate is bound by residues Y96, G161, 176 to 177 (EK), and S194.

It belongs to the bacterial/plant glucose-1-phosphate adenylyltransferase family. As to quaternary structure, homotetramer.

It carries out the reaction alpha-D-glucose 1-phosphate + ATP + H(+) = ADP-alpha-D-glucose + diphosphate. Its pathway is glycan biosynthesis; glycogen biosynthesis. Involved in the biosynthesis of ADP-glucose, a building block required for the elongation reactions to produce glycogen. Catalyzes the reaction between ATP and alpha-D-glucose 1-phosphate (G1P) to produce pyrophosphate and ADP-Glc. The protein is Glucose-1-phosphate adenylyltransferase 1 of Vibrio vulnificus (strain YJ016).